A 442-amino-acid chain; its full sequence is G-protein coupled receptor family C group 5 member C (442 aa).

Positions 1 to 23 (MAIHRTVLMCLGLPLFLLPGARA) are cleaved as a signal peptide. Residues 24 to 50 (QEQAPPGCSPDLNPLYYNLCDRSEAWG) lie on the Extracellular side of the membrane. Residues 51–71 (IILEAVAGAGVVTTFVLTIIL) traverse the membrane as a helical segment. At 72 to 85 (VASLPFVQDTKKRS) the chain is on the cytoplasmic side. A helical transmembrane segment spans residues 86–106 (LLGTQVFFLLGTLGLFCLVFA). The Extracellular segment spans residues 107–120 (CVVKPSFSTCASRR). A helical membrane pass occupies residues 121–141 (FLFGVLFAICFSCLVAHVLAL). Residues 142–155 (HFLVRKNHGPRGWV) are Cytoplasmic-facing. A helical transmembrane segment spans residues 156–176 (IFLVALLLSLVEVIINTEWLI). At 177–209 (ITLVRGAGTEGDALGNGSAGWVAVSPCAIANAD) the chain is on the extracellular side. Residue Asn-192 is glycosylated (N-linked (GlcNAc...) asparagine). The helical transmembrane segment at 210–230 (FVMALIYVMLLLLCAFSGAWS) threads the bilayer. Residues 231–242 (ALCGRFKRWRKH) are Cytoplasmic-facing. A helical transmembrane segment spans residues 243–263 (GVFILLTTTASIAVWVVWIVM). The Extracellular portion of the chain corresponds to 264–280 (YTYGNRQHNSPTWDDPT). The helical transmembrane segment at 281–301 (LAIALATNAWAFVLFYVIPEV) threads the bilayer. At 302–442 (SQVTRSSPEQ…QVFRNPYVWD (141 aa)) the chain is on the cytoplasmic side. Phosphoserine occurs at positions 345, 384, 404, and 407. Position 415 is a phosphotyrosine (Tyr-415). A Phosphothreonine modification is found at Thr-424.

The protein belongs to the G-protein coupled receptor 3 family.

It is found in the cell membrane. Its function is as follows. This retinoic acid-inducible G-protein coupled receptor provide evidence for a possible interaction between retinoid and G-protein signaling pathways. This is G-protein coupled receptor family C group 5 member C (GPRC5C) from Bos taurus (Bovine).